A 542-amino-acid chain; its full sequence is Membrane protein insertase YidC (542 aa).

Residues T5–P25 form a helical membrane-spanning segment. Positions E33–A64 are disordered. Residues Q54 to A64 are compositionally biased toward low complexity. 5 helical membrane passes run L323–Y343, Y345–F365, L419–I439, M463–I483, and M500–L520.

Belongs to the OXA1/ALB3/YidC family. Type 1 subfamily. Interacts with the Sec translocase complex via SecD. Specifically interacts with transmembrane segments of nascent integral membrane proteins during membrane integration.

The protein resides in the cell inner membrane. Its function is as follows. Required for the insertion and/or proper folding and/or complex formation of integral membrane proteins into the membrane. Involved in integration of membrane proteins that insert both dependently and independently of the Sec translocase complex, as well as at least some lipoproteins. Aids folding of multispanning membrane proteins. The polypeptide is Membrane protein insertase YidC (Pelobacter propionicus (strain DSM 2379 / NBRC 103807 / OttBd1)).